Consider the following 238-residue polypeptide: MLNQHSLEEIAEIHNLLGNIKQEYEIGIKPLLIKNSPKLFKNPHTVPKLKKIQINRGLGLAAQNTNLLKKNIEEFEKIAGQKPLITRSKKAIAGFKIREDMELGLSVTLRGEKMYTFLTKLLFFTFAQIRDFRGLSLRSFDKAGNYTLGLKEQLIFPEIDYDDVDQIQGFTINIILEHGSPKYRAESIDKILNGMILFKFLRFPLNDCGYYDKYEAFSDINRNWDKKRHLKRKRWSQE.

The protein belongs to the universal ribosomal protein uL5 family. In terms of assembly, part of the 50S ribosomal subunit; contacts the 5S rRNA.

It localises to the plastid. Its subcellular location is the chloroplast. Its function is as follows. Binds 5S rRNA, forms part of the central protuberance of the 50S subunit. The sequence is that of Large ribosomal subunit protein uL5c (rpl5) from Phaeodactylum tricornutum (strain CCAP 1055/1).